The following is a 44-amino-acid chain: MSDKPDISEVTSFDKTKLKKTETQEKNPLPSKETIEQEKAAATS.

2 stretches are compositionally biased toward basic and acidic residues: residues 1 to 25 (MSDKPDISEVTSFDKTKLKKTETQE) and 33 to 44 (ETIEQEKAAATS). The disordered stretch occupies residues 1–44 (MSDKPDISEVTSFDKTKLKKTETQEKNPLPSKETIEQEKAAATS). Ser-2 carries the N-acetylserine modification.

This sequence belongs to the thymosin beta family.

It localises to the cytoplasm. The protein localises to the cytoskeleton. Its function is as follows. Plays an important role in the organization of the cytoskeleton. Binds to and sequesters actin monomers (G actin) and therefore inhibits actin polymerization. This is Thymosin beta-12 from Lateolabrax japonicus (Japanese sea perch).